The primary structure comprises 355 residues: Peptide chain release factor 1 (355 aa).

An N5-methylglutamine modification is found at glutamine 231.

It belongs to the prokaryotic/mitochondrial release factor family. In terms of processing, methylated by PrmC. Methylation increases the termination efficiency of RF1.

The protein localises to the cytoplasm. Peptide chain release factor 1 directs the termination of translation in response to the peptide chain termination codons UAG and UAA. This is Peptide chain release factor 1 from Sulfurovum sp. (strain NBC37-1).